The primary structure comprises 212 residues: Large ribosomal subunit protein uL1 (212 aa).

This sequence belongs to the universal ribosomal protein uL1 family. In terms of assembly, part of the 50S ribosomal subunit.

Functionally, binds directly to 23S rRNA. Probably involved in E site tRNA release. Its function is as follows. Protein L1 is also a translational repressor protein, it controls the translation of its operon by binding to its mRNA. The sequence is that of Large ribosomal subunit protein uL1 from Methanosphaera stadtmanae (strain ATCC 43021 / DSM 3091 / JCM 11832 / MCB-3).